The primary structure comprises 232 residues: Fibrillarin-like rRNA/tRNA 2'-O-methyltransferase (232 aa).

Residues 89–90 (TT), 108–109 (EF), 133–134 (DA), and 153–156 (DIAQ) each bind S-adenosyl-L-methionine.

The protein belongs to the methyltransferase superfamily. Fibrillarin family. As to quaternary structure, interacts with nop5. Component of box C/D small ribonucleoprotein (sRNP) particles that contain rpl7ae, FlpA and nop5, plus a guide RNA. These sRNP particles form homodimers, giving rise to an asymmetric holoenzyme.

Functionally, involved in pre-rRNA and tRNA processing. Utilizes the methyl donor S-adenosyl-L-methionine to catalyze the site-specific 2'-hydroxyl methylation of ribose moieties in rRNA and tRNA. Site specificity is provided by a guide RNA that base pairs with the substrate. Methylation occurs at a characteristic distance from the sequence involved in base pairing with the guide RNA. This is Fibrillarin-like rRNA/tRNA 2'-O-methyltransferase from Saccharolobus solfataricus (strain ATCC 35092 / DSM 1617 / JCM 11322 / P2) (Sulfolobus solfataricus).